Here is a 115-residue protein sequence, read N- to C-terminus: Large ribosomal subunit protein bL19 (115 aa).

It belongs to the bacterial ribosomal protein bL19 family.

Functionally, this protein is located at the 30S-50S ribosomal subunit interface and may play a role in the structure and function of the aminoacyl-tRNA binding site. This Streptococcus sanguinis (strain SK36) protein is Large ribosomal subunit protein bL19.